We begin with the raw amino-acid sequence, 699 residues long: Elongation factor G (699 aa).

The tr-type G domain occupies 8 to 283; sequence EQIRNIGICA…AIVDFLPSPI (276 aa). GTP is bound by residues 17–24, 81–85, and 135–138; these read AHIDAGKT, DTPGH, and NKMD.

Belongs to the TRAFAC class translation factor GTPase superfamily. Classic translation factor GTPase family. EF-G/EF-2 subfamily.

The protein localises to the cytoplasm. Functionally, catalyzes the GTP-dependent ribosomal translocation step during translation elongation. During this step, the ribosome changes from the pre-translocational (PRE) to the post-translocational (POST) state as the newly formed A-site-bound peptidyl-tRNA and P-site-bound deacylated tRNA move to the P and E sites, respectively. Catalyzes the coordinated movement of the two tRNA molecules, the mRNA and conformational changes in the ribosome. The polypeptide is Elongation factor G (fusA) (Rickettsia prowazekii (strain Madrid E)).